Consider the following 77-residue polypeptide: Acyl carrier protein (77 aa).

Residues 1-76 enclose the Carrier domain; that stretch reads MATFDDVKAV…DVVNYIDNLK (76 aa). Serine 36 carries the O-(pantetheine 4'-phosphoryl)serine modification.

It belongs to the acyl carrier protein (ACP) family. Post-translationally, 4'-phosphopantetheine is transferred from CoA to a specific serine of apo-ACP by AcpS. This modification is essential for activity because fatty acids are bound in thioester linkage to the sulfhydryl of the prosthetic group.

Its subcellular location is the cytoplasm. It functions in the pathway lipid metabolism; fatty acid biosynthesis. Its function is as follows. Carrier of the growing fatty acid chain in fatty acid biosynthesis. In Campylobacter jejuni subsp. doylei (strain ATCC BAA-1458 / RM4099 / 269.97), this protein is Acyl carrier protein.